We begin with the raw amino-acid sequence, 115 residues long: Insulin (115 aa).

The N-terminal stretch at 1–26 (MALSPFLAAVIPLVLLLSRAPPSADT) is a signal peptide. 3 cysteine pairs are disulfide-bonded: C33/C101, C45/C114, and C100/C105. Positions 60–92 (DTGALAAFLPLAYAEDNESQDDESIGINEVLKS) are cleaved as a propeptide — c peptide.

Belongs to the insulin family. Heterodimer of a B chain and an A chain linked by two disulfide bonds.

Its subcellular location is the secreted. Its function is as follows. Insulin decreases blood glucose concentration. It increases cell permeability to monosaccharides, amino acids and fatty acids. It accelerates glycolysis, the pentose phosphate cycle, and glycogen synthesis in liver. The chain is Insulin (ins) from Myxine glutinosa (Atlantic hagfish).